The chain runs to 246 residues: rRNA methyltransferase 2, mitochondrial (246 aa).

The transit peptide at 1 to 18 (MAGYLKLVCVSFQRQGFH) directs the protein to the mitochondrion. Residues 83 to 86 (PGAW), aspartate 112, 129 to 130 (DV), and aspartate 154 contribute to the S-adenosyl-L-methionine site. Lysine 194 acts as the Proton acceptor in catalysis.

It belongs to the class I-like SAM-binding methyltransferase superfamily. RNA methyltransferase RlmE family. In terms of tissue distribution, widely expressed, with highest expression in muscle, placenta, and heart.

It is found in the mitochondrion. It carries out the reaction uridine(1369) in 16S rRNA + S-adenosyl-L-methionine = 2'-O-methyluridine(1369) in 16S rRNA + S-adenosyl-L-homocysteine + H(+). In terms of biological role, S-adenosyl-L-methionine-dependent 2'-O-ribose methyltransferase that catalyzes the formation of 2'-O-methyluridine at position 1369 (Um1369) in the 16S mitochondrial large subunit ribosomal RNA (mtLSU rRNA), a universally conserved modification in the peptidyl transferase domain of the mtLSU rRNA. This activity may require prior 2'-O-methylguanosine modification at position 1370 (Gm1370) by MRM3. Essential for late-stage assembly of mtLSU required for efficient translation of mitochondrial DNA encoded proteins; methyltransferase activity is not required for this function. Essential for mitochondrial respiratory function. In Homo sapiens (Human), this protein is rRNA methyltransferase 2, mitochondrial.